A 119-amino-acid polypeptide reads, in one-letter code: uncharacterized protein (119 aa).

This is an uncharacterized protein from Escherichia coli O157:H7.